A 51-amino-acid chain; its full sequence is uncharacterized protein (51 aa).

A disordered region spans residues 1–24 (MGGRFSGRVGIEKGGHPPSAADHS).

This is an uncharacterized protein from Escherichia coli.